We begin with the raw amino-acid sequence, 201 residues long: IMP cyclohydrolase (201 aa).

This sequence belongs to the archaeal IMP cyclohydrolase family.

The catalysed reaction is IMP + H2O = 5-formamido-1-(5-phospho-D-ribosyl)imidazole-4-carboxamide. It participates in purine metabolism; IMP biosynthesis via de novo pathway; IMP from 5-formamido-1-(5-phospho-D-ribosyl)imidazole-4-carboxamide: step 1/1. Catalyzes the cyclization of 5-formylamidoimidazole-4-carboxamide ribonucleotide to IMP. In Methanococcus maripaludis (strain C6 / ATCC BAA-1332), this protein is IMP cyclohydrolase.